The primary structure comprises 158 residues: 2-C-methyl-D-erythritol 2,4-cyclodiphosphate synthase (158 aa).

Positions 9 and 11 each coordinate a divalent metal cation. 4-CDP-2-C-methyl-D-erythritol 2-phosphate-binding positions include 9 to 11 (DVH) and 35 to 36 (HS). His43 provides a ligand contact to a divalent metal cation. 4-CDP-2-C-methyl-D-erythritol 2-phosphate-binding positions include 57–59 (DIG), 62–66 (FPDTD), 101–107 (AQKPKMA), 133–136 (TTTE), Phe140, and Arg143.

It belongs to the IspF family. Homotrimer. It depends on a divalent metal cation as a cofactor.

It catalyses the reaction 4-CDP-2-C-methyl-D-erythritol 2-phosphate = 2-C-methyl-D-erythritol 2,4-cyclic diphosphate + CMP. It participates in isoprenoid biosynthesis; isopentenyl diphosphate biosynthesis via DXP pathway; isopentenyl diphosphate from 1-deoxy-D-xylulose 5-phosphate: step 4/6. Involved in the biosynthesis of isopentenyl diphosphate (IPP) and dimethylallyl diphosphate (DMAPP), two major building blocks of isoprenoid compounds. Catalyzes the conversion of 4-diphosphocytidyl-2-C-methyl-D-erythritol 2-phosphate (CDP-ME2P) to 2-C-methyl-D-erythritol 2,4-cyclodiphosphate (ME-CPP) with a corresponding release of cytidine 5-monophosphate (CMP). This is 2-C-methyl-D-erythritol 2,4-cyclodiphosphate synthase from Bacillus cytotoxicus (strain DSM 22905 / CIP 110041 / 391-98 / NVH 391-98).